Here is a 205-residue protein sequence, read N- to C-terminus: Putative 3-methyladenine DNA glycosylase (205 aa).

The protein belongs to the DNA glycosylase MPG family.

This Clostridium perfringens (strain 13 / Type A) protein is Putative 3-methyladenine DNA glycosylase.